We begin with the raw amino-acid sequence, 203 residues long: CASP-like protein 5A2 (203 aa).

Topologically, residues 1–63 are cytoplasmic; sequence MRASRPVVHP…KDPPGAPGTP (63 aa). The segment at 39–58 is disordered; it reads AAHGGENAQPRGVRMKDPPG. A helical transmembrane segment spans residues 64-84; the sequence is GGLGLRLVQAFFAAAALAVMA. Over 85–94 the chain is Extracellular; it reads STDDFPSVSA. The chain crosses the membrane as a helical span at residues 95–115; sequence FCYLVAAAILQCLWSLSLAVV. Over 116-139 the chain is Cytoplasmic; that stretch reads DIYALLVKRSLRNPQAVCIFTIGD. Residues 140–160 form a helical membrane-spanning segment; it reads GITGTLTLGAACASAGITVLI. The Extracellular segment spans residues 161 to 177; that stretch reads GNDLNICANNHCASFET. Residues 178–198 traverse the membrane as a helical segment; that stretch reads ATAMAFISWFALAPSCVLNFW. Topologically, residues 199–203 are cytoplasmic; sequence SMASR.

Belongs to the Casparian strip membrane proteins (CASP) family. In terms of assembly, homodimer and heterodimers.

The protein resides in the cell membrane. The protein is CASP-like protein 5A2 of Oryza sativa subsp. indica (Rice).